The chain runs to 158 residues: Small ribosomal subunit protein uS15 (158 aa).

The span at 1 to 18 shows a compositional bias: basic residues; it reads MARMHARKRGKSGSKRPP. The disordered stretch occupies residues 1–21; the sequence is MARMHARKRGKSGSKRPPRTA.

The protein belongs to the universal ribosomal protein uS15 family. In terms of assembly, part of the 30S ribosomal subunit.

In Pyrococcus furiosus (strain ATCC 43587 / DSM 3638 / JCM 8422 / Vc1), this protein is Small ribosomal subunit protein uS15.